The chain runs to 276 residues: tRNA dimethylallyltransferase (276 aa).

Residues 9 to 12 are interaction with substrate tRNA; that stretch reads DSLS.

Belongs to the IPP transferase family. In terms of assembly, monomer. Requires Mg(2+) as cofactor.

The enzyme catalyses adenosine(37) in tRNA + dimethylallyl diphosphate = N(6)-dimethylallyladenosine(37) in tRNA + diphosphate. Catalyzes the transfer of a dimethylallyl group onto the adenine at position 37 in tRNAs that read codons beginning with uridine, leading to the formation of N6-(dimethylallyl)adenosine (i(6)A). The sequence is that of tRNA dimethylallyltransferase (miaA) from Helicobacter pylori (strain HPAG1).